A 628-amino-acid chain; its full sequence is Chaperone protein HtpG (628 aa).

The a; substrate-binding stretch occupies residues 1 to 337 (MSEKKYTFET…SADLPLNVSR (337 aa)). Positions 338–554 (EILQHNKVID…DYGMSLHMQK (217 aa)) are b. A c region spans residues 555 to 628 (MMEEAGQGFM…FVKLVNKYIR (74 aa)).

This sequence belongs to the heat shock protein 90 family. In terms of assembly, homodimer.

It localises to the cytoplasm. Molecular chaperone. Has ATPase activity. The chain is Chaperone protein HtpG from Francisella tularensis subsp. novicida (strain U112).